The primary structure comprises 428 residues: 3-phosphoshikimate 1-carboxyvinyltransferase (428 aa).

Positions 19, 20, and 24 each coordinate 3-phosphoshikimate. K19 serves as a coordination point for phosphoenolpyruvate. The phosphoenolpyruvate site is built by G91 and R119. Residues S164, Q166, D312, and K339 each contribute to the 3-phosphoshikimate site. Q166 is a binding site for phosphoenolpyruvate. D312 serves as the catalytic Proton acceptor. Residues R343 and R386 each contribute to the phosphoenolpyruvate site.

Belongs to the EPSP synthase family. As to quaternary structure, monomer.

It is found in the cytoplasm. The enzyme catalyses 3-phosphoshikimate + phosphoenolpyruvate = 5-O-(1-carboxyvinyl)-3-phosphoshikimate + phosphate. The protein operates within metabolic intermediate biosynthesis; chorismate biosynthesis; chorismate from D-erythrose 4-phosphate and phosphoenolpyruvate: step 6/7. Catalyzes the transfer of the enolpyruvyl moiety of phosphoenolpyruvate (PEP) to the 5-hydroxyl of shikimate-3-phosphate (S3P) to produce enolpyruvyl shikimate-3-phosphate and inorganic phosphate. The protein is 3-phosphoshikimate 1-carboxyvinyltransferase of Bacillus licheniformis (strain ATCC 14580 / DSM 13 / JCM 2505 / CCUG 7422 / NBRC 12200 / NCIMB 9375 / NCTC 10341 / NRRL NRS-1264 / Gibson 46).